Consider the following 407-residue polypeptide: Argininosuccinate synthase (407 aa).

Residues 16–24 (AYSGGLDTS) and Ala-44 each bind ATP. L-citrulline is bound by residues Tyr-96 and Ser-101. Position 126 (Gly-126) interacts with ATP. Thr-128, Asn-132, and Asp-133 together coordinate L-aspartate. Position 132 (Asn-132) interacts with L-citrulline. L-citrulline-binding residues include Arg-136, Ser-185, Ser-194, Glu-270, and Tyr-282.

Belongs to the argininosuccinate synthase family. Type 1 subfamily. Homotetramer.

Its subcellular location is the cytoplasm. The catalysed reaction is L-citrulline + L-aspartate + ATP = 2-(N(omega)-L-arginino)succinate + AMP + diphosphate + H(+). The protein operates within amino-acid biosynthesis; L-arginine biosynthesis; L-arginine from L-ornithine and carbamoyl phosphate: step 2/3. The chain is Argininosuccinate synthase from Shewanella denitrificans (strain OS217 / ATCC BAA-1090 / DSM 15013).